The chain runs to 223 residues: MIF4G domain-containing protein A (223 aa).

The MIF4G domain occupies 7–206; the sequence is QEDYKMQAFD…LEMIEYRAAG (200 aa).

This sequence belongs to the MIF4GD family. In terms of assembly, interacts with eif4g1, eif4g2 and slbp; probably tethered by SLBP to the 3'-end of mRNAs ending with the histone stem-loop, it also interacts with eif4g1 which is bound to their 5'-end.

Its subcellular location is the cytoplasm. The protein resides in the nucleus. Functions in replication-dependent translation of histone mRNAs which differ from other eukaryotic mRNAs in that they do not end with a poly-A tail but a stem-loop. May participate in circularizing those mRNAs specifically enhancing their translation. The sequence is that of MIF4G domain-containing protein A (mif4gd-a) from Xenopus laevis (African clawed frog).